A 271-amino-acid chain; its full sequence is 4-hydroxy-tetrahydrodipicolinate reductase (271 aa).

NAD(+)-binding positions include 10–15, glutamate 36, 100–102, and 124–127; these read GAGGRM, GTT, and SGNM. Histidine 157 functions as the Proton donor/acceptor in the catalytic mechanism. Histidine 158 is a binding site for (S)-2,3,4,5-tetrahydrodipicolinate. The active-site Proton donor is the lysine 161. Position 167–168 (167–168) interacts with (S)-2,3,4,5-tetrahydrodipicolinate; that stretch reads GT.

It belongs to the DapB family.

The protein resides in the cytoplasm. It carries out the reaction (S)-2,3,4,5-tetrahydrodipicolinate + NAD(+) + H2O = (2S,4S)-4-hydroxy-2,3,4,5-tetrahydrodipicolinate + NADH + H(+). The enzyme catalyses (S)-2,3,4,5-tetrahydrodipicolinate + NADP(+) + H2O = (2S,4S)-4-hydroxy-2,3,4,5-tetrahydrodipicolinate + NADPH + H(+). Its pathway is amino-acid biosynthesis; L-lysine biosynthesis via DAP pathway; (S)-tetrahydrodipicolinate from L-aspartate: step 4/4. In terms of biological role, catalyzes the conversion of 4-hydroxy-tetrahydrodipicolinate (HTPA) to tetrahydrodipicolinate. The sequence is that of 4-hydroxy-tetrahydrodipicolinate reductase from Rhodopseudomonas palustris (strain BisB18).